The chain runs to 201 residues: Ribosome maturation factor RimP (201 aa).

Belongs to the RimP family.

The protein localises to the cytoplasm. In terms of biological role, required for maturation of 30S ribosomal subunits. This chain is Ribosome maturation factor RimP, found in Rhizobium johnstonii (strain DSM 114642 / LMG 32736 / 3841) (Rhizobium leguminosarum bv. viciae).